The primary structure comprises 70 residues: NAD(P)H-quinone oxidoreductase subunit L (70 aa).

2 helical membrane-spanning segments follow: residues 2 to 22 (IVAL…PIAV) and 39 to 59 (LLMY…SPFA).

Belongs to the complex I NdhL subunit family. NDH-1 can be composed of about 15 different subunits; different subcomplexes with different compositions have been identified which probably have different functions.

It localises to the cellular thylakoid membrane. It catalyses the reaction a plastoquinone + NADH + (n+1) H(+)(in) = a plastoquinol + NAD(+) + n H(+)(out). It carries out the reaction a plastoquinone + NADPH + (n+1) H(+)(in) = a plastoquinol + NADP(+) + n H(+)(out). NDH-1 shuttles electrons from an unknown electron donor, via FMN and iron-sulfur (Fe-S) centers, to quinones in the respiratory and/or the photosynthetic chain. The immediate electron acceptor for the enzyme in this species is believed to be plastoquinone. Couples the redox reaction to proton translocation, and thus conserves the redox energy in a proton gradient. Cyanobacterial NDH-1 also plays a role in inorganic carbon-concentration. The protein is NAD(P)H-quinone oxidoreductase subunit L of Nostoc punctiforme (strain ATCC 29133 / PCC 73102).